A 475-amino-acid polypeptide reads, in one-letter code: Gamma-aminobutyric acid receptor subunit gamma-2 (475 aa).

The N-terminal stretch at 1-39 is a signal peptide; it reads MSSPNIWSTGSSVYSTPVFSQKMTLWILLLLSLYPGLTR. The Extracellular segment spans residues 41 to 275; sequence KSDDDYEDYA…FDLSRRMGYF (235 aa). Residues Asn-52 and Asn-129 are each glycosylated (N-linked (GlcNAc...) asparagine). Residues Cys-190 and Cys-204 are joined by a disulfide bond. Asn-247 carries an N-linked (GlcNAc...) asparagine glycan. The chain crosses the membrane as a helical span at residues 276 to 296; it reads TIQTYIPCTLIVVLSWVSFWI. The Cytoplasmic segment spans residues 297–302; the sequence is NKDAVP. A helical membrane pass occupies residues 303-322; it reads ARTSLGITTVLTMTTLSTIA. Residues 323–334 are Extracellular-facing; it reads RKSLPKVSYVTA. A helical membrane pass occupies residues 335 to 359; it reads MDLFVSVCFIFVFSALVEYGTLHYF. Residues 360–451 are Cytoplasmic-facing; the sequence is VSNRKPSKDK…IHIRIAKMDS (92 aa). Phosphoserine; by PKC is present on Ser-382. Residues 452–472 form a helical membrane-spanning segment; it reads YARIFFPTAFCLFNLVYWVSY. Over 473–475 the chain is Extracellular; it reads LYL.

Belongs to the ligand-gated ion channel (TC 1.A.9) family. Gamma-aminobutyric acid receptor (TC 1.A.9.5) subfamily. GABRG2 sub-subfamily. In terms of assembly, heteropentamer, formed by a combination of alpha (GABRA1-6), beta (GABRB1-3), gamma (GABRG1-3), delta (GABRD), epsilon (GABRE), rho (GABRR1-3), pi (GABRP) and theta (GABRQ) chains, each subunit exhibiting distinct physiological and pharmacological properties. Interacts with GABARAP. Interacts with KIF21B. Identified in a complex of 720 kDa composed of LHFPL4, NLGN2, GABRA1, GABRB2, GABRG2 and GABRB3. Interacts with LHFPL4. Interacts with SHISA7; interaction leads to the regulation of GABA(A) receptor trafficking, channel deactivation kinetics and pharmacology. In terms of processing, palmitoylated by ZDHHC3/GODZ; required for the accumulation of GABA(A) receptors at the postsynaptic membrane of inhibitory GABAergic synapses. Glycosylated.

It is found in the postsynaptic cell membrane. Its subcellular location is the cell membrane. The protein resides in the cell projection. It localises to the dendrite. The protein localises to the cytoplasmic vesicle membrane. The enzyme catalyses chloride(in) = chloride(out). Its activity is regulated as follows. Allosterically activated by benzodiazepines. Activated by pentobarbital. Inhibited by the antagonist bicuculline. Inhibited by zinc ions. Potentiated by histamine. Gamma subunit of the heteropentameric ligand-gated chloride channel gated by gamma-aminobutyric acid (GABA), a major inhibitory neurotransmitter in the brain. GABA-gated chloride channels, also named GABA(A) receptors (GABAAR), consist of five subunits arranged around a central pore and contain GABA active binding site(s) located at the alpha and beta subunit interface(s). When activated by GABA, GABAARs selectively allow the flow of chloride anions across the cell membrane down their electrochemical gradient. Gamma-2/GABRG2-containing GABAARs are found at both synaptic and extrasynaptic sites. Chloride influx into the postsynaptic neuron following GABAAR opening decreases the neuron ability to generate a new action potential, thereby reducing nerve transmission. GABAARs containing alpha-1 and beta-2 or -3 subunits exhibit synaptogenic activity; the gamma-2 subunit being necessary but not sufficient to induce rapid synaptic contacts formation. Extrasynaptic gamma-2-containing receptors contribute to the tonic GABAergic inhibition. GABAARs function also as histamine receptor where histamine binds at the interface of two neighboring beta subunits and potentiates GABA response in a gamma-2 subunit-controlled manner. The sequence is that of Gamma-aminobutyric acid receptor subunit gamma-2 (GABRG2) from Bos taurus (Bovine).